Consider the following 198-residue polypeptide: Na(+)-translocating NADH-quinone reductase subunit E (198 aa).

6 consecutive transmembrane segments (helical) span residues Ser11 to Val31, Val35 to Val55, Phe77 to Ile97, Gly110 to Val130, Ile140 to Ile160, and Leu176 to Val196.

This sequence belongs to the NqrDE/RnfAE family. As to quaternary structure, composed of six subunits; NqrA, NqrB, NqrC, NqrD, NqrE and NqrF.

The protein localises to the cell inner membrane. It catalyses the reaction a ubiquinone + n Na(+)(in) + NADH + H(+) = a ubiquinol + n Na(+)(out) + NAD(+). Its function is as follows. NQR complex catalyzes the reduction of ubiquinone-1 to ubiquinol by two successive reactions, coupled with the transport of Na(+) ions from the cytoplasm to the periplasm. NqrA to NqrE are probably involved in the second step, the conversion of ubisemiquinone to ubiquinol. This Histophilus somni (strain 2336) (Haemophilus somnus) protein is Na(+)-translocating NADH-quinone reductase subunit E.